Here is a 956-residue protein sequence, read N- to C-terminus: Matrilin-2 (956 aa).

Positions 1–23 (MEKMLVGCLLMLGQLFLVLPVDG) are cleaved as a signal peptide. Residues 57 to 232 (DLVFIIDSSR…SQIESLTSVF (176 aa)) form the VWFA 1 domain. Asparagine 221 is a glycosylation site (N-linked (GlcNAc...) asparagine). 10 EGF-like domains span residues 238 to 278 (TVHM…KTCR), 279 to 319 (IQDL…KRCT), 320 to 360 (AVDY…KTCS), 361 to 401 (KIDY…KTCR), 402 to 442 (RINY…KTCS), 443 to 483 (RVDH…KTCS), 484 to 524 (RADY…KTCA), 525 to 565 (KLDS…KTCR), 566 to 606 (RKDV…KRCR), and 607 to 647 (RKNV…KHCK). Intrachain disulfides connect cysteine 242–cysteine 253, cysteine 249–cysteine 262, cysteine 264–cysteine 277, cysteine 283–cysteine 294, cysteine 290–cysteine 303, cysteine 305–cysteine 318, cysteine 324–cysteine 335, cysteine 331–cysteine 344, cysteine 346–cysteine 359, cysteine 365–cysteine 376, cysteine 372–cysteine 385, cysteine 387–cysteine 400, cysteine 406–cysteine 417, cysteine 413–cysteine 426, cysteine 428–cysteine 441, cysteine 447–cysteine 458, cysteine 454–cysteine 467, cysteine 469–cysteine 482, cysteine 488–cysteine 499, cysteine 495–cysteine 508, cysteine 510–cysteine 523, cysteine 529–cysteine 540, cysteine 536–cysteine 549, cysteine 551–cysteine 564, cysteine 570–cysteine 581, cysteine 577–cysteine 590, cysteine 592–cysteine 605, cysteine 611–cysteine 622, cysteine 618–cysteine 631, and cysteine 633–cysteine 646. The region spanning 655-830 (DLVFVIDGSK…STMGEISEKL (176 aa)) is the VWFA 2 domain. The N-linked (GlcNAc...) asparagine glycan is linked to asparagine 890. Positions 917-955 (KCENLILFQNVANEEVRKLTQRLEEMTQRMEALENRLKY) form a coiled coil.

Detected in a variety of organs, including calvaria, uterus, heart and brain, as well as fibroblast and osteoblast cell lines.

It is found in the secreted. In terms of biological role, involved in matrix assembly. The polypeptide is Matrilin-2 (Matn2) (Mus musculus (Mouse)).